Consider the following 264-residue polypeptide: Thymidylate synthase (264 aa).

R21 is a binding site for dUMP. Residue H51 coordinates (6R)-5,10-methylene-5,6,7,8-tetrahydrofolate. A dUMP-binding site is contributed by 126 to 127; the sequence is RR. Catalysis depends on C146, which acts as the Nucleophile. DUMP contacts are provided by residues 166–169, N177, and 207–209; these read RSAD and HIY. D169 provides a ligand contact to (6R)-5,10-methylene-5,6,7,8-tetrahydrofolate. A263 serves as a coordination point for (6R)-5,10-methylene-5,6,7,8-tetrahydrofolate.

Belongs to the thymidylate synthase family. Bacterial-type ThyA subfamily. In terms of assembly, homodimer.

It is found in the cytoplasm. The catalysed reaction is dUMP + (6R)-5,10-methylene-5,6,7,8-tetrahydrofolate = 7,8-dihydrofolate + dTMP. It functions in the pathway pyrimidine metabolism; dTTP biosynthesis. Catalyzes the reductive methylation of 2'-deoxyuridine-5'-monophosphate (dUMP) to 2'-deoxythymidine-5'-monophosphate (dTMP) while utilizing 5,10-methylenetetrahydrofolate (mTHF) as the methyl donor and reductant in the reaction, yielding dihydrofolate (DHF) as a by-product. This enzymatic reaction provides an intracellular de novo source of dTMP, an essential precursor for DNA biosynthesis. In Ruthia magnifica subsp. Calyptogena magnifica, this protein is Thymidylate synthase.